The following is a 198-amino-acid chain: Large ribosomal subunit protein bL25 (198 aa).

The protein belongs to the bacterial ribosomal protein bL25 family. CTC subfamily. In terms of assembly, part of the 50S ribosomal subunit; part of the 5S rRNA/L5/L18/L25 subcomplex. Contacts the 5S rRNA. Binds to the 5S rRNA independently of L5 and L18.

Its function is as follows. This is one of the proteins that binds to the 5S RNA in the ribosome where it forms part of the central protuberance. This is Large ribosomal subunit protein bL25 from Streptomyces coelicolor (strain ATCC BAA-471 / A3(2) / M145).